We begin with the raw amino-acid sequence, 963 residues long: Glycine dehydrogenase (decarboxylating) (963 aa).

Lysine 707 is subject to N6-(pyridoxal phosphate)lysine.

This sequence belongs to the GcvP family. In terms of assembly, the glycine cleavage system is composed of four proteins: P, T, L and H. The cofactor is pyridoxal 5'-phosphate.

It carries out the reaction N(6)-[(R)-lipoyl]-L-lysyl-[glycine-cleavage complex H protein] + glycine + H(+) = N(6)-[(R)-S(8)-aminomethyldihydrolipoyl]-L-lysyl-[glycine-cleavage complex H protein] + CO2. The glycine cleavage system catalyzes the degradation of glycine. The P protein binds the alpha-amino group of glycine through its pyridoxal phosphate cofactor; CO(2) is released and the remaining methylamine moiety is then transferred to the lipoamide cofactor of the H protein. This Dechloromonas aromatica (strain RCB) protein is Glycine dehydrogenase (decarboxylating).